A 453-amino-acid polypeptide reads, in one-letter code: Protein LIAT1 (453 aa).

The tract at residues 1–152 (METRGPGLAV…HLPSDSSTVS (152 aa)) is disordered. A lysine-rich domain region spans residues 82–103 (KRKVKKKKRKKKTKGSGKGDDK). Basic residues predominate over residues 83–96 (RKVKKKKRKKKTKG). Over residues 106 to 117 (SQSLKSQPLSSS) the composition is skewed to low complexity. Basic and acidic residues predominate over residues 125–145 (CKERGPKPEHRQSKVEKKHLP). The tract at residues 145-197 (PSDSSTVSLPDFAEIENLANRINESLRWDGILADPEAEKERIRIYKLNRRKRY) is interaction with ATE1. Repeat copies occupy residues 201–210 (ALKGFHPDPE), 211–220 (ALKGFHPDPD), 221–230 (ALKGFHPDPE), 231–240 (ALKGFHPDPE), 241–250 (ALKGFHPDPE), 251–260 (ALKGFHPDPE), 261–270 (ALKGIHPDPE), 271–280 (ALKGIHPDPE), 281–290 (ALKGFHPDPE), 291–300 (ALKGFHPDPE), 301–310 (ALKGFHTDPE), 311–320 (ALKGFHIDPE), 321–330 (ALKGFHPDPK), 331–340 (ALKGFHPDPK), 341–350 (ALKGFHTDPE), 351–360 (ALKGFHPDPK), 361–370 (ALKGFHPDPE), 371–380 (ALKGFHPDPE), 381–390 (ALKGFHPDPE), and 391–400 (ALKGFHTDPN). Positions 201-400 (ALKGFHPDPE…ALKGFHTDPN (200 aa)) are 20 X 10 AA approximate tandem repeat of A-L-K-G-F-H-P-D-P-E. Disordered stretches follow at residues 225–306 (FHPD…KGFH) and 320–432 (EALK…CPNL). The span at 320 to 396 (EALKGFHPDP…PDPEALKGFH (77 aa)) shows a compositional bias: basic and acidic residues.

In terms of assembly, self-associates (via Lys-rich domain); targets LIAT1 to the nucleolus. Interacts with ATE1; it is not a substrate of ATE1, the interaction takes place in the cytoplasm and seems to increase ATE1 arginyltransferase activity. Interacts with JMJD6 and MRPS14. Post-translationally, post-translationally modified by JMJD6 lysyl-hydroxylase activity at its Lys-rich domain, which inhibits its self-association and nucleolar localization.

The protein resides in the nucleus. Its subcellular location is the nucleolus. It localises to the cytoplasm. Functionally, participates in nucleolar liquid-liquid phase separation (LLPS) through its N-terminal intrinsically disordered region (IDR). May be involved in ATE1-mediated N-terminal arginylation. This chain is Protein LIAT1, found in Homo sapiens (Human).